Here is a 61-residue protein sequence, read N- to C-terminus: Probable tautomerase LMOf2365_2536 (61 aa).

Pro-2 functions as the Proton acceptor; via imino nitrogen in the catalytic mechanism.

Belongs to the 4-oxalocrotonate tautomerase family.

This Listeria monocytogenes serotype 4b (strain F2365) protein is Probable tautomerase LMOf2365_2536.